We begin with the raw amino-acid sequence, 182 residues long: Adenylate kinase (182 aa).

12–17 (GAGKGT) provides a ligand contact to ATP. The interval 32-61 (STGDLLRAEVKAGSELGKEAEAVMNRGELV) is NMP. AMP-binding positions include Thr-33, Arg-38, 59–61 (ELV), 85–88 (GFPR), and Gln-92. An LID region spans residues 126 to 132 (ARGRADD). Arg-127 lines the ATP pocket. Residues Arg-129 and Arg-140 each coordinate AMP. Gly-168 serves as a coordination point for ATP.

It belongs to the adenylate kinase family. In terms of assembly, monomer.

It is found in the cytoplasm. It carries out the reaction AMP + ATP = 2 ADP. Its pathway is purine metabolism; AMP biosynthesis via salvage pathway; AMP from ADP: step 1/1. Functionally, catalyzes the reversible transfer of the terminal phosphate group between ATP and AMP. Plays an important role in cellular energy homeostasis and in adenine nucleotide metabolism. The polypeptide is Adenylate kinase (Synechococcus sp. (strain RCC307)).